The primary structure comprises 435 residues: Serine--tRNA ligase (435 aa).

L-serine is bound at residue 242–244 (TAE). 273–275 (RSE) provides a ligand contact to ATP. Glu296 is an L-serine binding site. 360–363 (EISS) is an ATP binding site. Ser396 is a binding site for L-serine.

This sequence belongs to the class-II aminoacyl-tRNA synthetase family. Type-1 seryl-tRNA synthetase subfamily. Homodimer. The tRNA molecule binds across the dimer.

Its subcellular location is the cytoplasm. It catalyses the reaction tRNA(Ser) + L-serine + ATP = L-seryl-tRNA(Ser) + AMP + diphosphate + H(+). The enzyme catalyses tRNA(Sec) + L-serine + ATP = L-seryl-tRNA(Sec) + AMP + diphosphate + H(+). It participates in aminoacyl-tRNA biosynthesis; selenocysteinyl-tRNA(Sec) biosynthesis; L-seryl-tRNA(Sec) from L-serine and tRNA(Sec): step 1/1. In terms of biological role, catalyzes the attachment of serine to tRNA(Ser). Is also able to aminoacylate tRNA(Sec) with serine, to form the misacylated tRNA L-seryl-tRNA(Sec), which will be further converted into selenocysteinyl-tRNA(Sec). The polypeptide is Serine--tRNA ligase (Vibrio vulnificus (strain YJ016)).